A 563-amino-acid polypeptide reads, in one-letter code: NADPH oxidase 1 (563 aa).

Over 1 to 8 the chain is Cytoplasmic; sequence MGNWLVNH. The helical transmembrane segment at 9–31 threads the bilayer; that stretch reads WLSVLFLVSWLGLNIFLFVYVFL. The Extracellular portion of the chain corresponds to 32-44; sequence NYEKSDKYYYTRE. Residues 45–69 traverse the membrane as a helical segment; sequence ILGTALALARASALCLNFNSMVILI. Residues 54-282 form the Ferric oxidoreductase domain; the sequence is RASALCLNFN…LAPIAFYIFE (229 aa). The Cytoplasmic portion of the chain corresponds to 70–102; sequence PVCRNLLSFLRGTCSFCNHTLRKPLDHNLTFHK. His101 and His115 together coordinate heme. Residues 103–123 traverse the membrane as a helical segment; the sequence is LVAYMICIFTAIHIIAHLFNF. Topologically, residues 124 to 167 are extracellular; that stretch reads ERYSRSQQAMDGSLASVLSSLFHPEKEDSWLNPIQSPNVTVMYA. A glycan (N-linked (GlcNAc...) asparagine) is linked at Asn161. Residues 168–188 traverse the membrane as a helical segment; that stretch reads AFTSIAGLTGVVATVALVLMV. The Cytoplasmic portion of the chain corresponds to 189-206; that stretch reads TSAMEFIRRNYFELFWYT. Residues 207 to 227 traverse the membrane as a helical segment; sequence HHLFIIYIICLGIHGLGGIVR. Heme-binding residues include His208 and His220. Residues 228-395 are Extracellular-facing; the sequence is GQTEESMSES…TVSEDVFQYE (168 aa). Asn241 is a glycosylation site (N-linked (GlcNAc...) asparagine). Residues 283 to 390 enclose the FAD-binding FR-type domain; the sequence is RILRFYRSRQ…DGPFGTVSED (108 aa). 337–343 is a binding site for FAD; sequence HPFTLTS. The chain crosses the membrane as a helical span at residues 396 to 416; it reads VAVLVGAGIGVTPFASFLKSI. Residues 396-535 are interaction with NOXO1; it reads VAVLVGAGIG…GVFLCGPPTL (140 aa). Over 417 to 563 the chain is Cytoplasmic; sequence WYKFQRAHNK…VQFYFNKETF (147 aa). Thr429 carries the phosphothreonine; by PKC/PRKCB modification.

In terms of assembly, NOX1, NOXA1, NOXO1, RAC1 and CYBA forms a functional multimeric complex supporting ROS production. Interacts with NOXO1. Interacts (via FAD-binding FR-type domain) with ARHGEF7 (via PH domain). The phosphorylated form at Thr-429 interacts with NOXA1 with greater affinity. FAD serves as cofactor. Post-translationally, phosphorylation at Thr-429 mediated by PKC/PRKBC positively regulates its interaction with NOXA1 and enzyme activity. Expressed in vascular smooth muscle cells.

It localises to the cell projection. The protein localises to the invadopodium membrane. It is found in the cell membrane. It carries out the reaction NADPH + 2 O2 = 2 superoxide + NADP(+) + H(+). The oxidase activity is potentiated by NOXA1 and NOXO1. Its function is as follows. NADPH oxidase that catalyzes the generation of superoxide from molecular oxygen utilizing NADPH as an electron donor. This is NADPH oxidase 1 (Nox1) from Rattus norvegicus (Rat).